The following is a 190-amino-acid chain: MARHVFLTGPPGVGKTTLIQKATEVLKSSGMPVDGFYTEEVRQGGRRIGFDVVTLSGIRGPLSRIGSEPLPGKRECRVGQYVVDLTSFEQLALPVLRNAGASGRPGQSICVIDEVGKMELFSQPFIQAVRQVLSIPGTVVLGTIPVPKGKPLALVEEIRTRKDVKVFSVTKENRNHLLPEIVTHMQSSRK.

Position 2 is an N-acetylalanine (Ala2). Residues 9–16 and 109–116 each bind ATP; these read GPPGVGKT and ICVIDEVG. An N6-acetyllysine modification is found at Lys165.

It belongs to the THEP1 NTPase family. Monomer.

The catalysed reaction is a ribonucleoside 5'-triphosphate + H2O = a ribonucleoside 5'-diphosphate + phosphate + H(+). It catalyses the reaction 5-methyl-UTP + H2O = 5-methyl-UDP + phosphate + H(+). It carries out the reaction CTP + H2O = CDP + phosphate + H(+). The enzyme catalyses ATP + H2O = ADP + phosphate + H(+). The catalysed reaction is GTP + H2O = GDP + phosphate + H(+). In terms of biological role, has nucleotide phosphatase activity towards ATP, GTP, CTP, TTP and UTP. Hydrolyzes nucleoside diphosphates with lower efficiency. This chain is Cancer-related nucleoside-triphosphatase homolog (NTPCR), found in Bos taurus (Bovine).